Here is a 248-residue protein sequence, read N- to C-terminus: MTIQSTANHQDGYLPAILCLHGAGTNATIFNLQARTIVRCLKHKFRFIFVNAPFESLPGPGVIPTFAEIRPYLRWHCDENAIQEFDVSPELVDNERRLVRSMISDKIEQEATGPSLGIVGVMAFSQGTRVATGLCLDPEFGSSIQFAIIIAGTFPALSLENPVSDSETTNLFSGINGNKHEQLQIPSVHVQGTMDPWGPESARLLKECWSADLAMVVKFHGAHQVPTSKKDAQAVAQAVLSCWDSAQT.

Catalysis depends on charge relay system residues S125, D195, and H223.

It belongs to the LovG family.

It participates in secondary metabolite biosynthesis. In terms of biological role, thioesterase; part of the gene cluster that mediates the biosynthesis of fusarielins F, G and H, decaketide compounds with 5 methylations and a decaline core that act as mycoestrogens as they stimulate growth of MCF-7 breast cancer cells. The initial compound in the pathway is produced by the reducing polyketide synthase FSL1. FSL1 lacks an active enoyl reductase (ER) domain and biosynthesis of fusarielins relies on the trans-acting enoyl reductase FSL5, before it is released through hydrolysis catalyzed by the thioesterase FSL2. Fusarielins F, G, and H have a C11=C12 cis double bond and is fully reduced between C10 and C11 and between C12 and C13. FSL3 can be involved in the formation of the C11=C12 cis double bond by moving a hypothetical C10=C11 or C12=C13 trans double bond to form prefusarielin. Prefusarielin is oxygenated at C15 and C16 by the cytochrome P450 monooxygenase FSL4, resulting in fusarielin F, which subsequently is epoxidized into fusarielin G by the same enzyme. The final step in the pathway is a reduction of the carboxylic acid moiety to yield fusarielin H via a still undetermined mechanism. The chain is Thioesterase FSL2 from Gibberella zeae (strain ATCC MYA-4620 / CBS 123657 / FGSC 9075 / NRRL 31084 / PH-1) (Wheat head blight fungus).